The sequence spans 152 residues: Nucleoside diphosphate kinase A 1 (152 aa).

Residues Lys12, Phe60, Arg88, Thr94, Arg105, and Asn115 each coordinate ATP. The Pros-phosphohistidine intermediate role is filled by His118.

It belongs to the NDK family. Homohexamer. It depends on Mg(2+) as a cofactor. In terms of processing, the N-terminus is blocked.

It is found in the cytoplasm. The protein localises to the cell membrane. The protein resides in the nucleus. The enzyme catalyses a 2'-deoxyribonucleoside 5'-diphosphate + ATP = a 2'-deoxyribonucleoside 5'-triphosphate + ADP. The catalysed reaction is a ribonucleoside 5'-diphosphate + ATP = a ribonucleoside 5'-triphosphate + ADP. Autophosphorylation at His-118 increases serine/threonine protein kinase activity of the enzyme. Interaction with the SET complex inhibits exonuclease activity. Major role in the synthesis of nucleoside triphosphates other than ATP. Possesses nucleoside-diphosphate kinase, serine/threonine-specific protein kinase, geranyl and farnesyl pyrophosphate kinase, histidine protein kinase and 3'-5' exonuclease activities. Involved in cell proliferation, differentiation and development, signal transduction, G protein-coupled receptor endocytosis, and gene expression. Required for neural development including neural patterning and cell fate determination. This Bos taurus (Bovine) protein is Nucleoside diphosphate kinase A 1 (NME1-1).